The sequence spans 350 residues: Ion-translocating oxidoreductase complex subunit D (350 aa).

4 consecutive transmembrane segments (helical) span residues 20–40 (IMLL…WFFG), 42–62 (GTVL…AAIL), 89–109 (IPPL…VVIA), and 123–143 (PAMI…TSWL). Thr187 bears the FMN phosphoryl threonine mark. A run of 5 helical transmembrane segments spans residues 214-234 (VLAG…GLFL), 242-262 (WHIP…GWLF), 267-287 (LASP…FFIL), 301-321 (LIFG…GGYP), and 322-342 (DGVA…DYYT).

Belongs to the NqrB/RnfD family. The complex is composed of six subunits: RnfA, RnfB, RnfC, RnfD, RnfE and RnfG. FMN serves as cofactor.

The protein localises to the cell inner membrane. Part of a membrane-bound complex that couples electron transfer with translocation of ions across the membrane. The protein is Ion-translocating oxidoreductase complex subunit D of Klebsiella pneumoniae (strain 342).